The following is a 37-amino-acid chain: Large ribosomal subunit protein bL36 (37 aa).

It belongs to the bacterial ribosomal protein bL36 family.

This Treponema denticola (strain ATCC 35405 / DSM 14222 / CIP 103919 / JCM 8153 / KCTC 15104) protein is Large ribosomal subunit protein bL36.